The sequence spans 78 residues: Beta-defensin 12 (78 aa).

The first 27 residues, Met1–Ala27, serve as a signal peptide directing secretion. 3 disulfides stabilise this stretch: Cys46-Cys73, Cys53-Cys67, and Cys57-Cys74.

Belongs to the beta-defensin family. As to expression, only expressed in epididymis (caput, corpus and cauda).

The protein resides in the secreted. Functionally, has antibacterial activity. The polypeptide is Beta-defensin 12 (Defb12) (Mus musculus (Mouse)).